The following is a 144-amino-acid chain: Cytochrome c oxidase subunit 4 isoform 1, mitochondrial (144 aa).

The Mitochondrial matrix portion of the chain corresponds to 1–73 (SVVKSEDFSL…SFAEMNRGSN (73 aa)). The residue at position 4 (Lys-4) is an N6-acetyllysine; alternate. An N6-succinyllysine; alternate modification is found at Lys-4. Position 28 is an N6-acetyllysine (Lys-28). A phosphoserine mark is found at Ser-31 and Ser-33. Lys-35 bears the N6-acetyllysine; alternate mark. Lys-35 is subject to N6-succinyllysine; alternate. N6-acetyllysine is present on Lys-42. A helical membrane pass occupies residues 74 to 99 (EWKTVVGGAMFFIGFTALIIMWQKRH). The Mitochondrial intermembrane segment spans residues 100–144 (VYGPLPQSFDKEWVAKQTKRMLDMKVNPIQGLASKWDYEKNEWKK).

It belongs to the cytochrome c oxidase IV family. As to quaternary structure, component of the cytochrome c oxidase (complex IV, CIV), a multisubunit enzyme composed of 14 subunits. The complex is composed of a catalytic core of 3 subunits MT-CO1, MT-CO2 and MT-CO3, encoded in the mitochondrial DNA, and 11 supernumerary subunits COX4I, COX5A, COX5B, COX6A, COX6B, COX6C, COX7A, COX7B, COX7C, COX8 and NDUFA4, which are encoded in the nuclear genome. The complex exists as a monomer or a dimer and forms supercomplexes (SCs) in the inner mitochondrial membrane with NADH-ubiquinone oxidoreductase (complex I, CI) and ubiquinol-cytochrome c oxidoreductase (cytochrome b-c1 complex, complex III, CIII), resulting in different assemblies (supercomplex SCI(1)III(2)IV(1) and megacomplex MCI(2)III(2)IV(2)). Interacts with PHB2; the interaction decreases in absence of SPHK2. Interacts with AFG1L. Interacts with ABCB7; this interaction allows the regulation of cellular iron homeostasis and cellular reactive oxygen species (ROS) levels in cardiomyocytes. Interacts with FLVCR2; this interaction occurs in the absence of heme and is disrupted upon heme binding. Interacts with IRGC.

It is found in the mitochondrion inner membrane. It participates in energy metabolism; oxidative phosphorylation. Its function is as follows. Component of the cytochrome c oxidase, the last enzyme in the mitochondrial electron transport chain which drives oxidative phosphorylation. The respiratory chain contains 3 multisubunit complexes succinate dehydrogenase (complex II, CII), ubiquinol-cytochrome c oxidoreductase (cytochrome b-c1 complex, complex III, CIII) and cytochrome c oxidase (complex IV, CIV), that cooperate to transfer electrons derived from NADH and succinate to molecular oxygen, creating an electrochemical gradient over the inner membrane that drives transmembrane transport and the ATP synthase. Cytochrome c oxidase is the component of the respiratory chain that catalyzes the reduction of oxygen to water. Electrons originating from reduced cytochrome c in the intermembrane space (IMS) are transferred via the dinuclear copper A center (CU(A)) of subunit 2 and heme A of subunit 1 to the active site in subunit 1, a binuclear center (BNC) formed by heme A3 and copper B (CU(B)). The BNC reduces molecular oxygen to 2 water molecules using 4 electrons from cytochrome c in the IMS and 4 protons from the mitochondrial matrix. The polypeptide is Cytochrome c oxidase subunit 4 isoform 1, mitochondrial (COX4I1) (Pongo pygmaeus (Bornean orangutan)).